We begin with the raw amino-acid sequence, 183 residues long: Inner membrane-spanning protein YciB (183 aa).

5 consecutive transmembrane segments (helical) span residues 19–39, 53–73, 76–96, 121–141, and 151–171; these read LYGV…QLIV, IMGI…DLNF, WKVT…QFVF, LGWA…SYYF, and TFGF…YLYP.

The protein belongs to the YciB family.

Its subcellular location is the cell inner membrane. In terms of biological role, plays a role in cell envelope biogenesis, maintenance of cell envelope integrity and membrane homeostasis. The chain is Inner membrane-spanning protein YciB from Actinobacillus pleuropneumoniae serotype 5b (strain L20).